The sequence spans 177 residues: Large ribosomal subunit protein uL22 (177 aa).

The disordered stretch occupies residues 118 to 177; that stretch reads VESRPSREGRRGGAGESAGGARARRAQGSKAAAAKKAPASSSTKAATTTEASEEAKGGSQ. Basic and acidic residues predominate over residues 121-130; it reads RPSREGRRGG. The segment covering 145–167 has biased composition (low complexity); that stretch reads GSKAAAAKKAPASSSTKAATTTE.

The protein belongs to the universal ribosomal protein uL22 family. As to quaternary structure, part of the 50S ribosomal subunit.

Functionally, this protein binds specifically to 23S rRNA; its binding is stimulated by other ribosomal proteins, e.g. L4, L17, and L20. It is important during the early stages of 50S assembly. It makes multiple contacts with different domains of the 23S rRNA in the assembled 50S subunit and ribosome. In terms of biological role, the globular domain of the protein is located near the polypeptide exit tunnel on the outside of the subunit, while an extended beta-hairpin is found that lines the wall of the exit tunnel in the center of the 70S ribosome. The chain is Large ribosomal subunit protein uL22 from Mycobacterium sp. (strain JLS).